A 65-amino-acid polypeptide reads, in one-letter code: NADH dehydrogenase [ubiquinone] 1 alpha subcomplex subunit 1 (65 aa).

A helical transmembrane segment spans residues 3-23 (LVWLEAMLPLGIIGGMLCIMG).

Belongs to the complex I NDUFA1 subunit family. As to quaternary structure, complex I is composed of at least 49 different subunits.

The protein resides in the mitochondrion inner membrane. Accessory subunit of the mitochondrial membrane respiratory chain NADH dehydrogenase (Complex I), that is believed not to be involved in catalysis. Complex I functions in the transfer of electrons from NADH to the respiratory chain. The immediate electron acceptor for the enzyme is believed to be ubiquinone. The protein is NADH dehydrogenase [ubiquinone] 1 alpha subcomplex subunit 1 of Arabidopsis thaliana (Mouse-ear cress).